The sequence spans 526 residues: Peptide chain release factor 3 (526 aa).

The tr-type G domain maps to Asn-8–Gln-277. GTP is bound by residues Ser-17 to Thr-24, Asp-85 to His-89, and Asn-139 to Asp-142.

It belongs to the TRAFAC class translation factor GTPase superfamily. Classic translation factor GTPase family. PrfC subfamily.

It is found in the cytoplasm. Its function is as follows. Increases the formation of ribosomal termination complexes and stimulates activities of RF-1 and RF-2. It binds guanine nucleotides and has strong preference for UGA stop codons. It may interact directly with the ribosome. The stimulation of RF-1 and RF-2 is significantly reduced by GTP and GDP, but not by GMP. In Actinobacillus pleuropneumoniae serotype 3 (strain JL03), this protein is Peptide chain release factor 3.